A 188-amino-acid chain; its full sequence is Elongation factor P (188 aa).

Lysine 34 carries the post-translational modification N6-(3,6-diaminohexanoyl)-5-hydroxylysine.

It belongs to the elongation factor P family. In terms of processing, may be beta-lysylated on the epsilon-amino group of Lys-34 by the combined action of EpmA and EpmB, and then hydroxylated on the C5 position of the same residue by EpmC (if this protein is present). Lysylation is critical for the stimulatory effect of EF-P on peptide-bond formation. The lysylation moiety may extend toward the peptidyltransferase center and stabilize the terminal 3-CCA end of the tRNA. Hydroxylation of the C5 position on Lys-34 may allow additional potential stabilizing hydrogen-bond interactions with the P-tRNA.

The protein localises to the cytoplasm. Its pathway is protein biosynthesis; polypeptide chain elongation. Functionally, involved in peptide bond synthesis. Alleviates ribosome stalling that occurs when 3 or more consecutive Pro residues or the sequence PPG is present in a protein, possibly by augmenting the peptidyl transferase activity of the ribosome. Modification of Lys-34 is required for alleviation. This chain is Elongation factor P, found in Photorhabdus laumondii subsp. laumondii (strain DSM 15139 / CIP 105565 / TT01) (Photorhabdus luminescens subsp. laumondii).